A 215-amino-acid chain; its full sequence is 3,4-dihydroxy-2-butanone 4-phosphate synthase (215 aa).

Residues 38 to 39 (RE), aspartate 43, 151 to 155 (RRGHT), and glutamate 175 contribute to the D-ribulose 5-phosphate site. Glutamate 39 is a Mg(2+) binding site. Position 154 (histidine 154) interacts with Mg(2+).

The protein belongs to the DHBP synthase family. As to quaternary structure, homodimer. It depends on Mg(2+) as a cofactor. Requires Mn(2+) as cofactor.

The catalysed reaction is D-ribulose 5-phosphate = (2S)-2-hydroxy-3-oxobutyl phosphate + formate + H(+). Its pathway is cofactor biosynthesis; riboflavin biosynthesis; 2-hydroxy-3-oxobutyl phosphate from D-ribulose 5-phosphate: step 1/1. Functionally, catalyzes the conversion of D-ribulose 5-phosphate to formate and 3,4-dihydroxy-2-butanone 4-phosphate. This is 3,4-dihydroxy-2-butanone 4-phosphate synthase from Haemophilus influenzae (strain PittEE).